The chain runs to 218 residues: Phosphoribosylformylglycinamidine synthase subunit PurQ (218 aa).

In terms of domain architecture, Glutamine amidotransferase type-1 spans 2–218 (TIGIVVFPGS…IKILQALLSN (217 aa)). C86 functions as the Nucleophile in the catalytic mechanism. Residues H194 and E196 contribute to the active site.

As to quaternary structure, part of the FGAM synthase complex composed of 1 PurL, 1 PurQ and 2 PurS subunits.

The protein localises to the cytoplasm. The enzyme catalyses N(2)-formyl-N(1)-(5-phospho-beta-D-ribosyl)glycinamide + L-glutamine + ATP + H2O = 2-formamido-N(1)-(5-O-phospho-beta-D-ribosyl)acetamidine + L-glutamate + ADP + phosphate + H(+). The catalysed reaction is L-glutamine + H2O = L-glutamate + NH4(+). Its pathway is purine metabolism; IMP biosynthesis via de novo pathway; 5-amino-1-(5-phospho-D-ribosyl)imidazole from N(2)-formyl-N(1)-(5-phospho-D-ribosyl)glycinamide: step 1/2. Its function is as follows. Part of the phosphoribosylformylglycinamidine synthase complex involved in the purines biosynthetic pathway. Catalyzes the ATP-dependent conversion of formylglycinamide ribonucleotide (FGAR) and glutamine to yield formylglycinamidine ribonucleotide (FGAM) and glutamate. The FGAM synthase complex is composed of three subunits. PurQ produces an ammonia molecule by converting glutamine to glutamate. PurL transfers the ammonia molecule to FGAR to form FGAM in an ATP-dependent manner. PurS interacts with PurQ and PurL and is thought to assist in the transfer of the ammonia molecule from PurQ to PurL. In Prochlorococcus marinus (strain SARG / CCMP1375 / SS120), this protein is Phosphoribosylformylglycinamidine synthase subunit PurQ.